The primary structure comprises 512 residues: tRNA-2-methylthio-N(6)-dimethylallyladenosine synthase (512 aa).

Positions 17–133 constitute an MTTase N-terminal domain; sequence RTYEVRTFGC…LPTLLERSAH (117 aa). [4Fe-4S] cluster contacts are provided by Cys-26, Cys-62, Cys-96, Cys-170, Cys-174, and Cys-177. Residues 156–392 form the Radical SAM core domain; sequence RESAYAGWVS…LALQERISEE (237 aa). A TRAM domain is found at 395 to 461; that stretch reads RKLIGTTQEL…PHFLIADGGV (67 aa). Positions 473-512 are disordered; sequence TELGETPTTAPVGVGLGMPSIKKPEPTTAGGCSTGGCGCE.

The protein belongs to the methylthiotransferase family. MiaB subfamily. As to quaternary structure, monomer. It depends on [4Fe-4S] cluster as a cofactor.

The protein localises to the cytoplasm. It carries out the reaction N(6)-dimethylallyladenosine(37) in tRNA + (sulfur carrier)-SH + AH2 + 2 S-adenosyl-L-methionine = 2-methylsulfanyl-N(6)-dimethylallyladenosine(37) in tRNA + (sulfur carrier)-H + 5'-deoxyadenosine + L-methionine + A + S-adenosyl-L-homocysteine + 2 H(+). Functionally, catalyzes the methylthiolation of N6-(dimethylallyl)adenosine (i(6)A), leading to the formation of 2-methylthio-N6-(dimethylallyl)adenosine (ms(2)i(6)A) at position 37 in tRNAs that read codons beginning with uridine. In Corynebacterium jeikeium (strain K411), this protein is tRNA-2-methylthio-N(6)-dimethylallyladenosine synthase.